Reading from the N-terminus, the 227-residue chain is Ribosomal RNA large subunit methyltransferase E (227 aa).

Residues Gly-78, Trp-80, Asp-103, Asp-119, and Asp-143 each coordinate S-adenosyl-L-methionine. The active-site Proton acceptor is Lys-183.

Belongs to the class I-like SAM-binding methyltransferase superfamily. RNA methyltransferase RlmE family.

The protein resides in the cytoplasm. The enzyme catalyses uridine(2552) in 23S rRNA + S-adenosyl-L-methionine = 2'-O-methyluridine(2552) in 23S rRNA + S-adenosyl-L-homocysteine + H(+). Its function is as follows. Specifically methylates the uridine in position 2552 of 23S rRNA at the 2'-O position of the ribose in the fully assembled 50S ribosomal subunit. The sequence is that of Ribosomal RNA large subunit methyltransferase E from Rickettsia bellii (strain RML369-C).